A 629-amino-acid chain; its full sequence is Dual specificity tyrosine-phosphorylation-regulated kinase 1B (629 aa).

Tyr63 bears the Phosphotyrosine mark. A disordered region spans residues 67-86 (KKRRAQQAPPQDSSTKKEKK). Residues 69 to 86 (RRAQQAPPQDSSTKKEKK) carry the Bipartite nuclear localization signal motif. Residues Tyr92 and Tyr111 each carry the phosphotyrosine modification. Positions 111 to 431 (YEIDSLIGKG…PLGALQHGFF (321 aa)) constitute a Protein kinase domain. Position 117–125 (117–125 (IGKGSFGQV)) interacts with ATP. Tyr129 carries the post-translational modification Phosphotyrosine. ATP is bound at residue Lys140. Tyr171 is subject to Phosphotyrosine. An ATP-binding site is contributed by 190–193 (FELL). Residue Asp239 is the Proton acceptor of the active site. Ser262 is modified (phosphoserine). A Phosphotyrosine; by autocatalysis modification is found at Tyr271. At Tyr273 the chain carries Phosphotyrosine. The segment at 380–399 (GVQTGGPGGRRAGEPGHSPA) is disordered. A Phosphotyrosine modification is found at Tyr401. Disordered stretches follow at residues 436-480 (DEAT…SNDN) and 496-629 (PITD…AASS). Over residues 438–477 (ATNTGPAGSSASTSPAPLDTCPSSSTASSISSSGGSSGSS) the composition is skewed to low complexity. The interval 480–520 (NRAYRYSNRYCGGPGPPITDCEMNSPQVLPSQPLRPWAGGD) is interaction with RANBP9. Pro residues-rich tracts occupy residues 552–562 (PPSPTSPPPPE) and 574–585 (DCSPPPPAPAPQ). Ser624 carries the phosphoserine modification.

It belongs to the protein kinase superfamily. CMGC Ser/Thr protein kinase family. MNB/DYRK subfamily. As to quaternary structure, dimer. Interacts with DCOHM, MAP2K3/MKK3, RANBP9 and TCF1/HNF1A. Part of a complex consisting of RANBP9, RAN, DYRK1B and COPS5. Interacts with DCAF7. Interacts with RNF169. In terms of processing, phosphorylated by MAP kinase. Tyrosine phosphorylation may be required for dimerization. In terms of tissue distribution, isoform 1 and isoform 2 are broadly expressed. Isoform 3 seems specific for skeletal muscle (at protein level).

The protein resides in the nucleus. Its subcellular location is the nucleolus. It is found in the chromosome. It catalyses the reaction L-seryl-[protein] + ATP = O-phospho-L-seryl-[protein] + ADP + H(+). The enzyme catalyses L-threonyl-[protein] + ATP = O-phospho-L-threonyl-[protein] + ADP + H(+). It carries out the reaction L-tyrosyl-[protein] + ATP = O-phospho-L-tyrosyl-[protein] + ADP + H(+). With respect to regulation, inhibited by RANBP9. In terms of biological role, dual-specificity kinase which possesses both serine/threonine and tyrosine kinase activities. Plays an essential role in ribosomal DNA (rDNA) double-strand break repair and rDNA copy number maintenance. During DNA damage, mediates transcription silencing in part via phosphorylating and enforcing DSB accumulation of the histone methyltransferase EHMT2. Enhances the transcriptional activity of TCF1/HNF1A and FOXO1. Inhibits epithelial cell migration. Mediates colon carcinoma cell survival in mitogen-poor environments. Inhibits the SHH and WNT1 pathways, thereby enhancing adipogenesis. In addition, promotes expression of the gluconeogenic enzyme glucose-6-phosphatase catalytic subunit 1 (G6PC1). The protein is Dual specificity tyrosine-phosphorylation-regulated kinase 1B (Dyrk1b) of Mus musculus (Mouse).